A 74-amino-acid polypeptide reads, in one-letter code: U6-agatoxin-Ao1a (74 aa).

Residues 1 to 19 (MRFYIAFFFLLLAADMALS) form the signal peptide. The propeptide occupies 20-30 (FEIGNSEELER). 3 disulfide bridges follow: Cys-44–Cys-56, Cys-49–Cys-61, and Cys-55–Cys-72.

As to expression, expressed by the venom gland.

The protein resides in the secreted. In Agelena orientalis (Funnel-web spider), this protein is U6-agatoxin-Ao1a.